The chain runs to 335 residues: MSDLCVGINGFGRIGRLVLRACLQKGIKVVAINDPFIDLQYMVYMFKYDSTHGRYKGEVSMEDGKLIVDDHSISVFQCMKPHEIPWGKAGADYVVESTGVFLSIDKASSHIQGGAKRVVVSAPSPDAPMFVMGVNEDKFDPSSMTIVSNASCTTNCLAPLAKVIHDNFGIEEALMTTVHAYTATQKTVDGPSAKAWRDGRGAHQNIIPASTGAAKAVGKVIPELNGKLTGMAFRVPVADVSVVELTCRLSRPGSYAEIKGAVKKAAEGPMKGYVGYTEYSVVSSDFIGDTHSSMFDAGAGISFNDNFVKLISWYDNEFGYSHRVADLLLYMHFKE.

NAD(+) contacts are provided by residues 13–14 (RI), aspartate 34, methionine 79, and serine 121. Residues 151-153 (SCT), threonine 182, 211-212 (TG), and arginine 234 each bind D-glyceraldehyde 3-phosphate. Cysteine 152 functions as the Nucleophile in the catalytic mechanism. Position 152 is an S-nitrosocysteine (cysteine 152). Asparagine 316 lines the NAD(+) pocket.

The protein belongs to the glyceraldehyde-3-phosphate dehydrogenase family. Homotetramer. In terms of processing, S-nitrosylation of Cys-152 leads to translocation to the nucleus.

It localises to the cytoplasm. The protein resides in the cytosol. It is found in the cytoskeleton. Its subcellular location is the nucleus. It catalyses the reaction D-glyceraldehyde 3-phosphate + phosphate + NAD(+) = (2R)-3-phospho-glyceroyl phosphate + NADH + H(+). The enzyme catalyses S-nitroso-L-cysteinyl-[GAPDH] + L-cysteinyl-[protein] = L-cysteinyl-[GAPDH] + S-nitroso-L-cysteinyl-[protein]. Its pathway is carbohydrate degradation; glycolysis; pyruvate from D-glyceraldehyde 3-phosphate: step 1/5. Functionally, has both glyceraldehyde-3-phosphate dehydrogenase and nitrosylase activities, thereby playing a role in glycolysis and nuclear functions, respectively. Glyceraldehyde-3-phosphate dehydrogenase is a key enzyme in glycolysis that catalyzes the first step of the pathway by converting D-glyceraldehyde 3-phosphate (G3P) into 3-phospho-D-glyceroyl phosphate. Participates in nuclear events including transcription, RNA transport, DNA replication and apoptosis. Nuclear functions are probably due to the nitrosylase activity that mediates cysteine S-nitrosylation of nuclear target proteins such as SIRT1, HDAC2 and PRKDC. In Oncorhynchus mykiss (Rainbow trout), this protein is Glyceraldehyde-3-phosphate dehydrogenase (gapdh).